We begin with the raw amino-acid sequence, 412 residues long: MDTRSGSQCSVTPEAILNNEKLVLPPRISRVNGWSLPLHYFQVVTWAVFVGLSSATFGIFIPFLPHAWKYIAYVVTGGIFSFHLVVHLIASCIDPADSNVRLMKNYSQPMPLFDRSKHAHVIQNQFCHLCKVTVNKKTKHCISCNKCVSGFDHHCKWINNCVGSRNYWFFFSTVASATAGMLCLIAILLYVLVQYLVNPGVLRTDPRYEDVKNMNTWLLFLPLFPVQVQTLIVVIIGMLVLLLDFLGLVHLGQLLIFHIYLKAKKMTTFEYLINNRKEESSKHQAVRKDPYVQMDKGVLQQGAGALGSSAQGVKAKSSLLIHKHLCHFCTSVNQDGDSTAREGDEDPCPSALGAKARNSRLICRRLCQFSTRVHPDGGSMAQEADDAPSISTLGLQQETTEPMKTDSAESED.

Residues 1-42 (MDTRSGSQCSVTPEAILNNEKLVLPPRISRVNGWSLPLHYFQ) lie on the Cytoplasmic side of the membrane. Residues 43–63 (VVTWAVFVGLSSATFGIFIPF) form a helical membrane-spanning segment. The Lumenal segment spans residues 64 to 69 (LPHAWK). The chain crosses the membrane as a helical span at residues 70–90 (YIAYVVTGGIFSFHLVVHLIA). At 91 to 176 (SCIDPADSNV…YWFFFSTVAS (86 aa)) the chain is on the cytoplasmic side. The region spanning 125 to 175 (QFCHLCKVTVNKKTKHCISCNKCVSGFDHHCKWINNCVGSRNYWFFFSTVA) is the DHHC domain. The S-palmitoyl cysteine intermediate role is filled by C155. A helical transmembrane segment spans residues 177–197 (ATAGMLCLIAILLYVLVQYLV). Residues 198–230 (NPGVLRTDPRYEDVKNMNTWLLFLPLFPVQVQT) are Lumenal-facing. The tract at residues 198–412 (NPGVLRTDPR…MKTDSAESED (215 aa)) is mediates interaction with IRF3 and STING1. The helical transmembrane segment at 231-251 (LIVVIIGMLVLLLDFLGLVHL) threads the bilayer. The Cytoplasmic portion of the chain corresponds to 252 to 412 (GQLLIFHIYL…MKTDSAESED (161 aa)). The tract at residues 374–412 (HPDGGSMAQEADDAPSISTLGLQQETTEPMKTDSAESED) is disordered. Over residues 389–400 (SISTLGLQQETT) the composition is skewed to polar residues. Positions 401–412 (EPMKTDSAESED) are enriched in basic and acidic residues.

Belongs to the DHHC palmitoyltransferase family. Interacts with IRF3 and STING1; in presence of DNA viruses recruits IRF3 to STING1 promoting IRF3 phosphorylation and activation. Expressed in testis.

The protein resides in the endoplasmic reticulum membrane. The enzyme catalyses L-cysteinyl-[protein] + hexadecanoyl-CoA = S-hexadecanoyl-L-cysteinyl-[protein] + CoA. Its function is as follows. Endoplasmic reticulum-localized palmitoyltransferase that could catalyze the addition of palmitate onto various protein substrates and be involved in a variety of cellular processes. Has a palmitoyltransferase activity toward NCDN and regulates NCDN association with endosome membranes through this palmitoylation. May play a role in cell proliferation. Also has a palmitoyltransferase activity-independent function in DNA virus-triggered and CGAS-mediated innate immune response. Functions as an adapter that recruits IRF3 to STING1 to promote the activation of that key transcriptional regulator of type I interferon (IFN)-dependent immune response. The chain is Palmitoyltransferase ZDHHC11 from Homo sapiens (Human).